The following is a 1038-amino-acid chain: DNA polymerase delta catalytic subunit (1038 aa).

The disordered stretch occupies residues 1–29 (MSHSIPITSSPPPALKKLKLPNGSEEPSE). Zn(2+) contacts are provided by cysteine 942, cysteine 945, cysteine 958, and cysteine 961. The segment at 942 to 961 (CVSCRTPLKKDNLGALCPNC) adopts a CysA-type zinc-finger fold. Cysteine 992, cysteine 995, cysteine 1005, and cysteine 1010 together coordinate [4Fe-4S] cluster. Residues 992 to 1010 (CQRCQGSLHQEVLCSNKDC) carry the CysB motif motif.

The protein belongs to the DNA polymerase type-B family. As to quaternary structure, heterodimer with subunits of 125 kDa and 50 kDa. The 125 kDa subunit contains the polymerase active site and most likely the active site for the 3'-5' exonuclease activity. It depends on [4Fe-4S] cluster as a cofactor.

It localises to the nucleus. The catalysed reaction is DNA(n) + a 2'-deoxyribonucleoside 5'-triphosphate = DNA(n+1) + diphosphate. In terms of biological role, this polymerase possesses two enzymatic activities: DNA synthesis (polymerase) and an exonucleolytic activity that degrades single-stranded DNA in the 3'- to 5'-direction. This is DNA polymerase delta catalytic subunit (POL3) from Candida albicans (Yeast).